The sequence spans 109 residues: MSLTDKTCVPCQGGVAPMDRQQAEQMLVQVPEWSLDTDARMIYRRFKFRNFIDALSFVNRVTEVAEAEDHHPDILLGYGYAEVRIQTHKIEGLHENDFILAAKVDALGA.

It belongs to the pterin-4-alpha-carbinolamine dehydratase family.

It catalyses the reaction (4aS,6R)-4a-hydroxy-L-erythro-5,6,7,8-tetrahydrobiopterin = (6R)-L-erythro-6,7-dihydrobiopterin + H2O. In Halorhodospira halophila (strain DSM 244 / SL1) (Ectothiorhodospira halophila (strain DSM 244 / SL1)), this protein is Putative pterin-4-alpha-carbinolamine dehydratase.